The chain runs to 260 residues: MKSIKRIGLCISLLILIIFATSCGSNKITGDSKEEQIKKSFAKSLDKYPTENLEEFYDKEGYRDGEFEKDDKGTWLIRSEMKIQLKGENLESRGAVIEINRNTRTAKGNYIVREVVEDSDGMTHNHTKRYPVKMENNKMIPLKSIDDEKVKKEIEEFKFFVQYGNFKELENYKEDEVSYNPEVPIYSAQYQLKNSDYNVEQLRKRYNIPTQKAPKLLLKGSGNLKGSSVGYKNIEFTFVENKEENIYFTDSVYFNPSEDK.

The N-terminal stretch at 1-22 is a signal peptide; it reads MKSIKRIGLCISLLILIIFATS. Cys-23 is lipidated: N-palmitoyl cysteine. Cys-23 carries the S-diacylglycerol cysteine lipid modification.

It belongs to the staphylococcal tandem lipoprotein family.

It localises to the cell membrane. This is an uncharacterized protein from Staphylococcus aureus (strain N315).